We begin with the raw amino-acid sequence, 262 residues long: Indole-3-glycerol phosphate synthase (262 aa).

The protein belongs to the TrpC family.

The enzyme catalyses 1-(2-carboxyphenylamino)-1-deoxy-D-ribulose 5-phosphate + H(+) = (1S,2R)-1-C-(indol-3-yl)glycerol 3-phosphate + CO2 + H2O. It functions in the pathway amino-acid biosynthesis; L-tryptophan biosynthesis; L-tryptophan from chorismate: step 4/5. The sequence is that of Indole-3-glycerol phosphate synthase from Bordetella petrii (strain ATCC BAA-461 / DSM 12804 / CCUG 43448).